Reading from the N-terminus, the 156-residue chain is Small ribosomal subunit protein uS7 (156 aa).

It belongs to the universal ribosomal protein uS7 family. Part of the 30S ribosomal subunit. Contacts proteins S9 and S11.

Functionally, one of the primary rRNA binding proteins, it binds directly to 16S rRNA where it nucleates assembly of the head domain of the 30S subunit. Is located at the subunit interface close to the decoding center, probably blocks exit of the E-site tRNA. This Paenarthrobacter aurescens (strain TC1) protein is Small ribosomal subunit protein uS7.